A 454-amino-acid polypeptide reads, in one-letter code: GTPase Der (454 aa).

EngA-type G domains are found at residues Ala4–Lys167 and Leu188–Gln363. GTP contacts are provided by residues Gly10 to Ser17, Asp56 to Leu60, Asn121 to Glu124, Gly194 to Ser201, Asp241 to Val245, and Asn306 to Asp309. The region spanning Lys364–Lys450 is the KH-like domain.

Belongs to the TRAFAC class TrmE-Era-EngA-EngB-Septin-like GTPase superfamily. EngA (Der) GTPase family. Associates with the 50S ribosomal subunit.

Functionally, GTPase that plays an essential role in the late steps of ribosome biogenesis. This is GTPase Der from Orientia tsutsugamushi (strain Ikeda) (Rickettsia tsutsugamushi).